Reading from the N-terminus, the 339-residue chain is MamK-like protein (339 aa).

Residues 18–19 (YS), Asp-74, 162–164 (AWT), and 216–220 (KEQFA) each bind ATP.

It belongs to the FtsA/MreB family. MamK subfamily. As to quaternary structure, forms cytoplasmic filament polymers. Forms filaments with MamK.

It localises to the cytoplasm. The protein localises to the cytoskeleton. The catalysed reaction is ATP + H2O = ADP + phosphate + H(+). In terms of biological role, protein with ATPase activity which forms pole-to-pole filaments in vivo, probably with MamK. Efficient filament formation requires MamK. Probably promotes turnover of MamK filaments, by providing a monomer pool. In vivo, in the absence of its paralog MamK, forms thin filaments from pole to pole. In vitro forms straight filaments and bundles in the absence of ATP. Filament formation is triggered by KCl and MgCl(2); polymerizes more slowly and makes thinner filaments than MamK. Expression in E.coli yields a filament in the cell's longitudinal axis; the protein nucleates at one pole or the cell septum. The sequence is that of MamK-like protein from Paramagnetospirillum magneticum (strain ATCC 700264 / AMB-1) (Magnetospirillum magneticum).